A 457-amino-acid chain; its full sequence is TnpB-like protein ORF457 (457 aa).

Residues methionine 1–isoleucine 22 are disordered.

It in the N-terminal section; belongs to the transposase 2 family. This sequence in the C-terminal section; belongs to the transposase 35 family.

This is TnpB-like protein ORF457 from Acidianus two-tailed virus (ATV).